A 109-amino-acid polypeptide reads, in one-letter code: uncharacterized protein (109 aa).

Positions 36-109 (NSSNNLNNNN…KKKKKKRRVK (74 aa)) are disordered. Over residues 39-88 (NNLNNNNFNENNLKNNNNRNGNNNNNNNNNNNNNNNNNNNNNNNNNNNNN) the composition is skewed to low complexity. Basic residues predominate over residues 99–109 (QKKKKKKRRVK).

This is an uncharacterized protein from Dictyostelium discoideum (Social amoeba).